The following is a 421-amino-acid chain: MPTLSVFMDVPLAHKLEGSLLKTYKQDDYPNKIFLAYRVCMTNEGHPWVSLVVQKTRLQISQDPSLNYEYLPTMGLKSFIQASLALLFGKHSQAIVENRVGGVHTVGDSGAFQLGVQFLRAWHKDARIVYIISSQKELHGLVFQDMGFTVYEYSVWDPKKLCMDPDILLNVVEQIPHGCVLVMGNIIDCKLTPSGWAKLMSMIKSKQIFPFFDIPCQGLYTSDLEEDTRILQYFVSQGFEFFCSQSLSKNFGIYDEGVGMLVVVAVNNQQLLCVLSQLEGLAQALWLNPPNTGARVITSILCNPALLGEWKQSLKEVVENIMLTKEKVKEKLQLLGTPGSWGHITEQSGTHGYLGLNSQQVEYLVRKKHIYIPKNGQINFSCINANNINYITEGINEAVLLTESSEMCLPKEKKTLIGIKL.

At lysine 249 the chain carries N6-(pyridoxal phosphate)lysine.

The protein belongs to the class-I pyridoxal-phosphate-dependent aminotransferase family. Homodimer. Requires pyridoxal 5'-phosphate as cofactor.

Its subcellular location is the cytoplasm. It carries out the reaction L-aspartate + 2-oxoglutarate = oxaloacetate + L-glutamate. In Homo sapiens (Human), this protein is Putative aspartate aminotransferase, cytoplasmic 2 (GOT1L1).